The sequence spans 143 residues: Glutaredoxin-2 (143 aa).

A mitochondrion-targeting transit peptide spans 1–30 (METNFSFDSNLIVIIIITLFATRIIAKRFL). Phosphoserine is present on Ser37. Positions 41 to 143 (VAHVKDLIGQ…LAEILKPVFQ (103 aa)) constitute a Glutaredoxin domain. 58-63 (KTYCPY) provides a ligand contact to glutathione. Cys61 bears the S-glutathionyl cysteine; alternate mark. Cys61 and Cys64 are oxidised to a cystine. Ser91 is subject to Phosphoserine. Glutathione-binding positions include Val109 and 122–123 (NS).

Belongs to the glutaredoxin family.

It localises to the cytoplasm. The protein localises to the mitochondrion. It catalyses the reaction 2 glutathione + H2O2 = glutathione disulfide + 2 H2O. The enzyme catalyses 1-chloro-2,4-dinitrobenzene + glutathione = 2,4-dinitrophenyl-S-glutathione + chloride + H(+). It carries out the reaction RX + glutathione = an S-substituted glutathione + a halide anion + H(+). Its function is as follows. Component of the glutathione system which performs several activities such as glutathione-dependent oxidoreductase, glutathione peroxidase and glutathione S-transferase (GST) activity. The disulfide bond functions as an electron carrier in the glutathione-dependent synthesis of deoxyribonucleotides by the enzyme ribonucleotide reductase. In addition, it is also involved in reducing cytosolic protein- and non-protein-disulfides in a coupled system with glutathione reductase. Required for resistance to reactive oxygen species (ROS) by directly reducing hydroperoxides and for the detoxification of ROS-mediated damage. GRX2 is more active as an oxidoreductase than GRX1. Responsible for the S-glutathionylation of DHBP synthase. The protein is Glutaredoxin-2 (GRX2) of Saccharomyces cerevisiae (strain ATCC 204508 / S288c) (Baker's yeast).